The primary structure comprises 451 residues: Ammonium transporter Rh type B (451 aa).

The Cytoplasmic segment spans residues 1–11 (MADVSTSMRLK). Residues 12 to 32 (LPVVCFILEIILIILFGALVQ) traverse the membrane as a helical segment. Residues 33–63 (YDYETDAKEWHNQSHNDYENDFYFRYPSFQD) lie on the Extracellular side of the membrane. An N-linked (GlcNAc...) asparagine glycan is attached at asparagine 44. A helical membrane pass occupies residues 64 to 84 (VHVMIFIGFGFLMTFLQKYGF). Over 85–87 (GSV) the chain is Cytoplasmic. The chain crosses the membrane as a helical span at residues 88–108 (GFNFLIAAFSLQWATLMQGFF). Residues 109–121 (HGMHGGKIHVGVE) lie on the Extracellular side of the membrane. Residues 122 to 142 (SMINADFCTGSVLISFGAVLG) form a helical membrane-spanning segment. Topologically, residues 143–151 (KTSPIQLLT) are cytoplasmic. A helical membrane pass occupies residues 152–172 (MAMFEVTLFAVNEFILLSLLG). The Extracellular segment spans residues 173-176 (TRDA). The helical transmembrane segment at 177-197 (GGSMTIHTFGAYFGLMVTRIL) threads the bilayer. Topologically, residues 198-216 (YRPHLDKSKHRNSSVYHSD) are cytoplasmic. A helical transmembrane segment spans residues 217 to 237 (LFAMIGTIYLWMFWPSFNSAI). The Extracellular segment spans residues 238–247 (TAHGDDQHRT). A helical membrane pass occupies residues 248–270 (ALNTYYSLAACTLATYGMSAVTS). Over 271-274 (HDGK) the chain is Cytoplasmic. Residues 275–295 (LDMVHIQNAALAGGVAVGTAG) form a helical membrane-spanning segment. Residues 296 to 298 (EMM) lie on the Extracellular side of the membrane. The helical transmembrane segment at 299–319 (LTPFGSMIVGFLAGIISVLGF) threads the bilayer. Residues 320–340 (KFLSPILESKLKIQDTCGVHN) are Cytoplasmic-facing. The helical transmembrane segment at 341–361 (LHGMPGVLGAIVGAVTAALAT) threads the bilayer. Topologically, residues 362-390 (MDVYGKGMEDVFPAVADGSIDASKQGGVQ) are extracellular. Residues 391-411 (ALSLAITLGIALLGGLIVVFG) form a helical membrane-spanning segment. The Cytoplasmic portion of the chain corresponds to 412–451 (TPPDTLCFEDGVYWEVPESEAPHEAQLTTVRTEETEKLSS).

It belongs to the ammonium transporter (TC 2.A.49) family. Rh subfamily.

The protein resides in the basolateral cell membrane. Its subcellular location is the cytoplasmic vesicle membrane. In terms of biological role, functions as an ammonia transporter. May play a role in the elimination of ammonia in the gill. This chain is Ammonium transporter Rh type B (rhbg), found in Tetraodon nigroviridis (Spotted green pufferfish).